A 153-amino-acid chain; its full sequence is Cytochrome c-type biogenesis protein CcmE (153 aa).

Over 1 to 8 the chain is Cytoplasmic; sequence MTTRRGRR. The helical; Signal-anchor for type II membrane protein transmembrane segment at 9–29 threads the bilayer; sequence ALLIAGGVGLLALAAALVLNA. Topologically, residues 30–153 are periplasmic; that stretch reads LRSNLVFFFS…PSATLQTEAR (124 aa). Heme-binding residues include H124 and Y128.

This sequence belongs to the CcmE/CycJ family.

It is found in the cell inner membrane. Its function is as follows. Heme chaperone required for the biogenesis of c-type cytochromes. Transiently binds heme delivered by CcmC and transfers the heme to apo-cytochromes in a process facilitated by CcmF and CcmH. The polypeptide is Cytochrome c-type biogenesis protein CcmE (Bordetella parapertussis (strain 12822 / ATCC BAA-587 / NCTC 13253)).